The following is a 172-amino-acid chain: Photosystem I assembly protein Ycf3 (172 aa).

TPR repeat units lie at residues 35–70 (AFTY…EIDP), 74–107 (SYIL…NPFL), and 122–155 (GEQA…TPGN).

It belongs to the Ycf3 family.

Its subcellular location is the plastid. The protein localises to the chloroplast thylakoid membrane. In terms of biological role, essential for the assembly of the photosystem I (PSI) complex. May act as a chaperone-like factor to guide the assembly of the PSI subunits. The polypeptide is Photosystem I assembly protein Ycf3 (Sorghum bicolor (Sorghum)).